A 397-amino-acid chain; its full sequence is Circumsporozoite protein (397 aa).

A signal peptide spans Met1 to Ala18. The interval Ser69 to Asp313 is disordered. Residues Lys85–Lys92 are required for the binding to heparan sulfate proteoglycans (HSPGs) on the surface of host hepatocytes. Residues Lys93–Pro97 are region I; contains the proteolytic cleavage site. Residues Asn101–Asn273 are compositionally biased toward low complexity. A run of 42 repeats spans residues Asn105–Pro108, Asn109–Pro112, Asn113–Pro116, Asn117–Pro120, Asn121–Pro124, Asn125–Pro128, Asn129–Pro132, Asn133–Pro136, Asn137–Pro140, Asn141–Pro144, Asn145–Pro148, Asn149–Pro152, Asn153–Pro156, Asn157–Pro160, Asn161–Pro164, Asn165–Pro168, Asn169–Pro172, Asn173–Pro176, Asn177–Pro180, Asn181–Pro184, Asn185–Pro188, Asn189–Pro192, Asn193–Pro196, Asn197–Pro200, Asn201–Pro204, Asn205–Pro208, Asn209–Pro212, Asn213–Pro216, Asn217–Pro220, Asn221–Pro224, Asn225–Pro228, Asn229–Pro232, Asn233–Pro236, Asn237–Pro240, Asn241–Pro244, Asn245–Pro248, Asn249–Pro252, Asn253–Pro256, Asn257–Pro260, Asn261–Pro264, Asn265–Pro268, and Asn269–Pro272. The interval Asn105–Pro272 is 42 X 4 AA tandem repeats of N-[AV]-[ND]-P. Residues Lys274–Asn290 show a composition bias toward polar residues. Residues Glu295–Glu309 show a composition bias toward low complexity. The 54-residue stretch at Lys322–Ser375 folds into the TSP type-1 domain. Intrachain disulfides connect Cys334-Cys369 and Cys338-Cys374. O-linked (Fuc) threonine glycosylation is present at Thr337. Residue Cys374 is the site of GPI-anchor amidated cysteine attachment. A propeptide spans Ser375 to Asn397 (removed in mature form).

It belongs to the plasmodium circumsporozoite protein family. In terms of processing, during host cell invasion, proteolytically cleaved at the cell membrane in the region I by a papain-like cysteine protease of parasite origin. Cleavage is triggered by the sporozoite contact with highly sulfated heparan sulfate proteoglycans (HSPGs) present on the host hepatocyte cell surface. Cleavage exposes the TSP type-1 (TSR) domain and is required for productive invasion of host hepatocytes but not for adhesion to the host cell membrane. Cleavage is dispensable for sporozoite development in the oocyst, motility and for traversal of host and vector cells. Post-translationally, O-glycosylated; maybe by POFUT2.

It localises to the cell membrane. The protein resides in the cytoplasm. Essential sporozoite protein. In the mosquito vector, required for sporozoite development in the oocyst, migration through the vector hemolymph and entry into the vector salivary glands. In the vertebrate host, required for sporozoite migration through the host dermis and infection of host hepatocytes. Binds to highly sulfated heparan sulfate proteoglycans (HSPGs) on the surface of host hepatocytes. Functionally, in the vertebrate host, binds to highly sulfated heparan sulfate proteoglycans (HSPGs) on the surface of host hepatocytes and is required for sporozoite invasion of the host hepatocytes. This chain is Circumsporozoite protein, found in Plasmodium falciparum (isolate NF54).